We begin with the raw amino-acid sequence, 280 residues long: Golgi to ER traffic protein 2 (280 aa).

Over 1–149 (MPSDREKQRI…IAYNLYQQRK (149 aa)) the chain is Cytoplasmic. Residues 15–59 (RQAKMAKGGASDRLNKILSQGSSVKTSAVSVLDQPQPADHDPEGM) form a disordered region. Residues 31-43 (ILSQGSSVKTSAV) are compositionally biased toward polar residues. The helical transmembrane segment at 150–170 (VRHRFLVVRMVSILANFVYHF) threads the bilayer. The Lumenal segment spans residues 171–197 (LTISDFSFSPSANPFIRSIPPTSSVSS). The chain crosses the membrane as a helical span at residues 198–217 (FFQIFVAIEAVLVAAYIAAS). Residues 218-257 (RNVPSNNNGLLVKGISMAAMFVPKLQRFQPLIMKIIGCWD) lie on the Cytoplasmic side of the membrane. A helical transmembrane segment spans residues 258–278 (TVTFVLNDLGLVVLLFGLISF). At 279–280 (RR) the chain is on the lumenal side.

The protein belongs to the GET2 family. Component of the Golgi to ER traffic (GET) complex, which is composed of GET1, GET2 and GET3. Within the complex, GET1 and GET2 form a heterotetramer which is stabilized by phosphatidylinositol binding and which binds to the GET3 homodimer.

The protein resides in the endoplasmic reticulum membrane. The protein localises to the golgi apparatus membrane. Required for the post-translational delivery of tail-anchored (TA) proteins to the endoplasmic reticulum. Together with GET1, acts as a membrane receptor for soluble GET3, which recognizes and selectively binds the transmembrane domain of TA proteins in the cytosol. The GET complex cooperates with the HDEL receptor ERD2 to mediate the ATP-dependent retrieval of resident ER proteins that contain a C-terminal H-D-E-L retention signal from the Golgi to the ER. The chain is Golgi to ER traffic protein 2 from Meyerozyma guilliermondii (strain ATCC 6260 / CBS 566 / DSM 6381 / JCM 1539 / NBRC 10279 / NRRL Y-324) (Yeast).